The primary structure comprises 25 residues: C-reactive protein P2 subunit 4 (25 aa).

The region spanning 1-25 (GRSLVFPEETANSFVELFPAKELSL) is the Pentraxin (PTX) domain.

The protein belongs to the pentraxin family. Heteropentamer. Discoid arrangement of 5 non-covalently bound subunits 1, 2, 3 and 4. It depends on Ca(2+) as a cofactor. Glycosylated.

It is found in the secreted. Functionally, displays several functions associated with host defense: it promotes agglutination, bacterial capsular swelling, phagocytosis, and complement fixation through its calcium-dependent binding to phosphorylcholine. This is C-reactive protein P2 subunit 4 from Gadus morhua (Atlantic cod).